The primary structure comprises 287 residues: Elongation factor Ts (287 aa).

Residues 80–83 (TDFL) form an involved in Mg(2+) ion dislocation from EF-Tu region.

This sequence belongs to the EF-Ts family.

The protein resides in the cytoplasm. Functionally, associates with the EF-Tu.GDP complex and induces the exchange of GDP to GTP. It remains bound to the aminoacyl-tRNA.EF-Tu.GTP complex up to the GTP hydrolysis stage on the ribosome. This Pseudomonas putida (strain ATCC 700007 / DSM 6899 / JCM 31910 / BCRC 17059 / LMG 24140 / F1) protein is Elongation factor Ts.